The following is a 559-amino-acid chain: DNA primase (559 aa).

A CHC2-type zinc finger spans residues Cys-37–Cys-61. The Toprim domain maps to Lys-246–Asn-327. 3 residues coordinate Mg(2+): Glu-252, Asp-296, and Asp-298.

It belongs to the DnaG primase family. In terms of assembly, monomer. The C-terminal domain DnaB-binding domain exists as a dimer in solution. Interacts with DnaB via its C-terminal domain (residues 415-559 of DnaG); up to 3 DnaG fragments bind to a DnaB hexamer. Requires Zn(2+) as cofactor. It depends on Mg(2+) as a cofactor.

The catalysed reaction is ssDNA + n NTP = ssDNA/pppN(pN)n-1 hybrid + (n-1) diphosphate.. RNA polymerase that catalyzes the synthesis of short RNA molecules used as primers for DNA polymerase during DNA replication. Stimulates the 5'-3' DNA helicase activity of DnaB. This Helicobacter pylori (strain ATCC 700392 / 26695) (Campylobacter pylori) protein is DNA primase.